We begin with the raw amino-acid sequence, 394 residues long: Flavin-dependent monooxygenase, oxygenase subunit HsaA (394 aa).

FMN contacts are provided by residues tryptophan 84, serine 118–tyrosine 120, tryptophan 141–serine 143, arginine 263, alanine 346–threonine 347, and histidine 368–alanine 369.

This sequence belongs to the HpaH/HsaA monooxygenase family. In terms of assembly, homotetramer under anaerobic conditions. HsaAB monooxygenase consists of an oxygenase component HsaA and a reductase component HsaB.

The catalysed reaction is 3-hydroxy-9,10-secoandrosta-1,3,5(10)-triene-9,17-dione + FMNH2 + O2 = 3,4-dihydroxy-9,10-secoandrosta-1,3,5(10)-triene-9,17-dione + FMN + H2O + H(+). The protein operates within lipid metabolism; steroid biosynthesis. Its function is as follows. Catalyzes the o-hydroxylation of 3-hydroxy-9,10-secoandrosta-1,3,5(10)-triene-9,17-dione (3-HSA) to 3,4-dihydroxy-9,10-secoandrosta-1,3,5(10)-triene-9,17-dione (3,4-DHSA) in the catabolism of cholesterol. The sequence is that of Flavin-dependent monooxygenase, oxygenase subunit HsaA from Mycobacterium tuberculosis (strain CDC 1551 / Oshkosh).